A 628-amino-acid chain; its full sequence is Keratin, type II cytoskeletal 3 (628 aa).

Residues 1–21 (MSRQASKTSGGGSQGFSGRSA) form a disordered region. The head stretch occupies residues 1–197 (MSRQASKTSG…DPQIGQVKAQ (197 aa)). A phosphoserine mark is found at Ser-13 and Ser-56. Residues 198 to 233 (EREQIKTLNNKFASFIDKVRFLEQQNKVLETKWNLL) form a coil 1A region. An IF rod domain is found at 198 to 513 (EREQIKTLNN…KLLEGEEYRM (316 aa)). Positions 234–254 (QQQGTSSISGTNNLEPLFENH) are linker 1. The segment at 255 to 346 (INYLRSYLDN…TLYDAELSQM (92 aa)) is coil 1B. Residue Lys-296 is modified to N6,N6-dimethyllysine. The interval 347 to 370 (QSHISDTSVVLSMDNNRSLDLDSI) is linker 12. Position 364 is a phosphoserine (Ser-364). The coil 2 stretch occupies residues 371-509 (IAEVRAQYED…ATYRKLLEGE (139 aa)). The segment at 510-628 (EYRMSGECPS…SSQSSQRYSR (119 aa)) is tail. Residues 605 to 628 (SSASNRGGSIKFSQSSQSSQRYSR) are disordered. A compositionally biased stretch (low complexity) spans 617–628 (SQSSQSSQRYSR).

This sequence belongs to the intermediate filament family. In terms of assembly, heterotetramer of two type I and two type II keratins. Keratin-3 associates with keratin-12. In terms of tissue distribution, cornea specific.

The protein is Keratin, type II cytoskeletal 3 (KRT3) of Homo sapiens (Human).